A 481-amino-acid polypeptide reads, in one-letter code: tRNA pseudouridine(38/39) synthase (481 aa).

The residue at position 2 (Ala2) is an N-acetylalanine. A compositionally biased stretch (basic and acidic residues) spans 29–41 (KKEQAKNKEDSNI). The tract at residues 29 to 50 (KKEQAKNKEDSNIRENSAGAGK) is disordered. The Nucleophile role is filled by Asp118. A substrate-binding site is contributed by Tyr195. A phosphothreonine mark is found at Thr456, Thr466, and Thr468.

Belongs to the tRNA pseudouridine synthase TruA family.

Its subcellular location is the nucleus. The catalysed reaction is uridine(38/39) in tRNA = pseudouridine(38/39) in tRNA. In terms of biological role, formation of pseudouridine at position 39 in the anticodon stem and loop of transfer RNAs. This chain is tRNA pseudouridine(38/39) synthase (PUS3), found in Homo sapiens (Human).